A 115-amino-acid chain; its full sequence is Large ribosomal subunit protein bL20c (115 aa).

The protein belongs to the bacterial ribosomal protein bL20 family.

It localises to the plastid. It is found in the chloroplast. Functionally, binds directly to 23S ribosomal RNA and is necessary for the in vitro assembly process of the 50S ribosomal subunit. It is not involved in the protein synthesizing functions of that subunit. This is Large ribosomal subunit protein bL20c from Chaetosphaeridium globosum (Charophycean green alga).